The primary structure comprises 571 residues: Leiomodin-3 (571 aa).

Disordered regions lie at residues Met1 to Pro29, Pro46 to Asn67, and Pro91 to Asp228. Positions Gln10–Leu23 are enriched in acidic residues. Positions Phe94–Arg105 are enriched in polar residues. Basic and acidic residues predominate over residues Leu119–Ser134. A compositionally biased stretch (acidic residues) spans Glu142–Glu179. The span at Gln180 to Ile192 shows a compositional bias: basic and acidic residues. The span at His193 to Thr204 shows a compositional bias: polar residues. Residues Thr206–Asp228 show a composition bias toward basic and acidic residues. The stretch at Val397–Gly436 forms a coiled coil. In terms of domain architecture, WH2 spans Pro545 to Val564.

It belongs to the tropomodulin family. May interact with tropomyosin alpha (TPM1/2) N-terminus. Interacts with KLHL40; leading to stabilization. Ubiquitinated, leading to its degradation. Interaction with KLHL40 negatively regulates ubiquitination and degradation. Skeletal muscle and heart-specific (at protein level).

It is found in the cytoplasm. The protein localises to the myofibril. Its subcellular location is the sarcomere. The protein resides in the a band. It localises to the m line. It is found in the cytoskeleton. Essential for the organization of sarcomeric actin thin filaments in skeletal muscle. Increases the rate of actin polymerization. The protein is Leiomodin-3 of Mus musculus (Mouse).